A 153-amino-acid chain; its full sequence is MSEKPVLGIQDIQNLLPHRYPFLLVDKILSYDLNTRSIVAQKNVTINEPFFVGHFPEAPIMPGVLILEALAQAAGVLLGIILENDRDKKIALFLGIQKAKFRQPVKPGDVLILKAEFSLISAKGGKAIAQAFVGSQIVAEGELSFVLVKKESI.

The active site involves H54.

It belongs to the thioester dehydratase family. FabZ subfamily.

Its subcellular location is the cytoplasm. The catalysed reaction is a (3R)-hydroxyacyl-[ACP] = a (2E)-enoyl-[ACP] + H2O. In terms of biological role, involved in unsaturated fatty acids biosynthesis. Catalyzes the dehydration of short chain beta-hydroxyacyl-ACPs and long chain saturated and unsaturated beta-hydroxyacyl-ACPs. This Chlamydia muridarum (strain MoPn / Nigg) protein is 3-hydroxyacyl-[acyl-carrier-protein] dehydratase FabZ.